The sequence spans 320 residues: ATP-dependent 6-phosphofructokinase (320 aa).

G12 contributes to the ATP binding site. Residue 22 to 26 participates in ADP binding; the sequence is RSVIR. Residues 73–74 and 103–106 contribute to the ATP site; these read RF and GDGS. D104 is a binding site for Mg(2+). Substrate is bound at residue 126–128; it reads TID. The active-site Proton acceptor is the D128. R155 lines the ADP pocket. Substrate-binding positions include R163 and 170–172; that span reads MGR. Residues 186 to 188 and 214 to 216 contribute to the ADP site; these read GAE and KRH. Residues E223, R244, and 250–253 each bind substrate; that span reads HIQR.

It belongs to the phosphofructokinase type A (PFKA) family. ATP-dependent PFK group I subfamily. Prokaryotic clade 'B1' sub-subfamily. Homotetramer. Mg(2+) is required as a cofactor.

It localises to the cytoplasm. It catalyses the reaction beta-D-fructose 6-phosphate + ATP = beta-D-fructose 1,6-bisphosphate + ADP + H(+). It participates in carbohydrate degradation; glycolysis; D-glyceraldehyde 3-phosphate and glycerone phosphate from D-glucose: step 3/4. With respect to regulation, allosterically activated by ADP and other diphosphonucleosides, and allosterically inhibited by phosphoenolpyruvate. Its function is as follows. Catalyzes the phosphorylation of D-fructose 6-phosphate to fructose 1,6-bisphosphate by ATP, the first committing step of glycolysis. The polypeptide is ATP-dependent 6-phosphofructokinase (Tolumonas auensis (strain DSM 9187 / NBRC 110442 / TA 4)).